The chain runs to 124 residues: Small ribosomal subunit protein uS12 (124 aa).

Aspartate 89 is modified (3-methylthioaspartic acid).

This sequence belongs to the universal ribosomal protein uS12 family. As to quaternary structure, part of the 30S ribosomal subunit. Contacts proteins S8 and S17. May interact with IF1 in the 30S initiation complex.

In terms of biological role, with S4 and S5 plays an important role in translational accuracy. Interacts with and stabilizes bases of the 16S rRNA that are involved in tRNA selection in the A site and with the mRNA backbone. Located at the interface of the 30S and 50S subunits, it traverses the body of the 30S subunit contacting proteins on the other side and probably holding the rRNA structure together. The combined cluster of proteins S8, S12 and S17 appears to hold together the shoulder and platform of the 30S subunit. The chain is Small ribosomal subunit protein uS12 from Mannheimia succiniciproducens (strain KCTC 0769BP / MBEL55E).